The primary structure comprises 337 residues: Adenylosuccinate synthetase (337 aa).

GTP contacts are provided by residues 12 to 18 (GDEGKGK) and 42 to 44 (GHT). D13 (proton acceptor) is an active-site residue. Mg(2+)-binding residues include D13 and G42. Residues 13–16 (DEGK), 40–43 (NAGH), T127, R141, Q179, T194, and R256 each bind IMP. The active-site Proton donor is H43. Residue 252 to 258 (TVTGRRR) participates in substrate binding. GTP-binding positions include R258, 284–286 (CLD), and 324–326 (STG).

Belongs to the adenylosuccinate synthetase family. Homodimer. Requires Mg(2+) as cofactor.

The protein localises to the cytoplasm. The catalysed reaction is IMP + L-aspartate + GTP = N(6)-(1,2-dicarboxyethyl)-AMP + GDP + phosphate + 2 H(+). Its pathway is purine metabolism; AMP biosynthesis via de novo pathway; AMP from IMP: step 1/2. Its function is as follows. Plays an important role in the de novo pathway of purine nucleotide biosynthesis. Catalyzes the first committed step in the biosynthesis of AMP from IMP. The chain is Adenylosuccinate synthetase from Methanococcus maripaludis (strain C6 / ATCC BAA-1332).